Reading from the N-terminus, the 1040-residue chain is Contactin-2 (1040 aa).

An N-terminal signal peptide occupies residues 1–30; it reads MGTATRRKPHLLLVAAVALVSSSAWSSALG. Ig-like C2-type domains are found at residues 43-128, 133-222, 239-322, 327-411, 417-504, and 509-603; these read PLSV…AILR, QEFS…SVFS, PSIK…GRII, PEWL…AELA, PDFR…GILS, and TKIT…ATVL. 4 disulfides stabilise this stretch: cysteine 61/cysteine 111, cysteine 155/cysteine 207, cysteine 261/cysteine 306, and cysteine 348/cysteine 395. N-linked (GlcNAc...) asparagine glycans are attached at residues asparagine 76, asparagine 198, and asparagine 204. Residues asparagine 461, asparagine 477, asparagine 498, and asparagine 525 are each glycosylated (N-linked (GlcNAc...) asparagine). Fibronectin type-III domains follow at residues 610–708, 713–810, 815–910, and 915–1006; these read PPGG…TREA, APSG…SAEE, APTK…TMKP, and PPGN…NGGT. Positions 694–720 are disordered; the sequence is GEPSGPSSKIRTREAAPSVAPSGLSGG. A Cell attachment site motif is present at residues 794–796; that stretch reads RGD. Asparagine 830, asparagine 904, asparagine 918, and asparagine 940 each carry an N-linked (GlcNAc...) asparagine glycan. A disordered region spans residues 894–919; that stretch reads AGTGPASPSANATTMKPPPRRPPGNI. The GPI-anchor amidated asparagine moiety is linked to residue asparagine 1012. The propeptide at 1013–1040 is removed in mature form; sequence MAVRPAPHPGTVISHSVAMLILIGSLEL.

Belongs to the immunoglobulin superfamily. Contactin family.

It is found in the cell membrane. Its function is as follows. In conjunction with another transmembrane protein, CNTNAP2, contributes to the organization of axonal domains at nodes of Ranvier by maintaining voltage-gated potassium channels at the juxtaparanodal region. May be involved in cell adhesion. The chain is Contactin-2 (CNTN2) from Homo sapiens (Human).